The sequence spans 298 residues: Probable GTP 3',8-cyclase (298 aa).

Positions 4 to 227 constitute a Radical SAM core domain; the sequence is RYGREIRSFR…MQNRKKYVID (224 aa). Arg13 serves as a coordination point for GTP. [4Fe-4S] cluster contacts are provided by Cys20 and Cys24. Tyr26 serves as a coordination point for S-adenosyl-L-methionine. Cys27 contributes to the [4Fe-4S] cluster binding site. GTP is bound at residue Lys61. Gly65 contributes to the S-adenosyl-L-methionine binding site. A GTP-binding site is contributed by Thr91. Ser115 contributes to the S-adenosyl-L-methionine binding site. Lys152 lines the GTP pocket. Residues Cys243 and Cys246 each contribute to the [4Fe-4S] cluster site. Position 248-250 (248-250) interacts with GTP; that stretch reads RIR. Cys260 serves as a coordination point for [4Fe-4S] cluster.

The protein belongs to the radical SAM superfamily. MoaA family. The cofactor is [4Fe-4S] cluster.

It carries out the reaction GTP + AH2 + S-adenosyl-L-methionine = (8S)-3',8-cyclo-7,8-dihydroguanosine 5'-triphosphate + 5'-deoxyadenosine + L-methionine + A + H(+). It participates in cofactor biosynthesis; molybdopterin biosynthesis. In terms of biological role, catalyzes the cyclization of GTP to (8S)-3',8-cyclo-7,8-dihydroguanosine 5'-triphosphate. This chain is Probable GTP 3',8-cyclase, found in Methanococcus maripaludis (strain C6 / ATCC BAA-1332).